The sequence spans 578 residues: Polymerase acidic protein (578 aa).

As to quaternary structure, the RNA polymerase is composed of three subunits: PB1, PB2 and PA. Post-translationally, phosphorylated on serines and threonines by host kinases.

In terms of biological role, implicated in endonuclease cleavage of capped RNA primers. Displays an elongation factor activity in viral RNA synthesis. Dispensable for viral transcription, but not replication. The polypeptide is Polymerase acidic protein (Infectious salmon anemia virus (isolate Atlantic salmon/Norway/810/9/99) (ISAV)).